The sequence spans 326 residues: Acetyl-coenzyme A carboxylase carboxyl transferase subunit alpha (326 aa).

The CoA carboxyltransferase C-terminal domain occupies 44–298 (KLETRAMQLR…KQALLDNLDE (255 aa)).

It belongs to the AccA family. Acetyl-CoA carboxylase is a heterohexamer composed of biotin carboxyl carrier protein (AccB), biotin carboxylase (AccC) and two subunits each of ACCase subunit alpha (AccA) and ACCase subunit beta (AccD).

It is found in the cytoplasm. It catalyses the reaction N(6)-carboxybiotinyl-L-lysyl-[protein] + acetyl-CoA = N(6)-biotinyl-L-lysyl-[protein] + malonyl-CoA. It participates in lipid metabolism; malonyl-CoA biosynthesis; malonyl-CoA from acetyl-CoA: step 1/1. In terms of biological role, component of the acetyl coenzyme A carboxylase (ACC) complex. First, biotin carboxylase catalyzes the carboxylation of biotin on its carrier protein (BCCP) and then the CO(2) group is transferred by the carboxyltransferase to acetyl-CoA to form malonyl-CoA. The protein is Acetyl-coenzyme A carboxylase carboxyl transferase subunit alpha of Nostoc sp. (strain PCC 7120 / SAG 25.82 / UTEX 2576).